The following is a 394-amino-acid chain: RNA demethylase ALKBH5 (394 aa).

Disordered regions lie at residues 1-26 (MAAA…YKAG) and 48-83 (AEPY…EEAR). At Ala2 the chain carries N-acetylalanine. Lys57 is covalently cross-linked (Glycyl lysine isopeptide (Lys-Gly) (interchain with G-Cter in ubiquitin)). Basic and acidic residues predominate over residues 59–83 (KYPEDSDPERSDFEEQQLQKEEEAR). 2 positions are modified to phosphoserine: Ser64 and Ser69. A coiled-coil region spans residues 67–116 (ERSDFEEQQLQKEEEARKVKSGIRQMRLFSQDECAKIEARIDEVVSRAEK). Residue Lys86 forms a Glycyl lysine isopeptide (Lys-Gly) (interchain with G-Cter in SUMO1) linkage. Residue Ser87 is modified to Phosphoserine. An N6-acetyllysine modification is found at Lys132. The active site involves Tyr139. 3 residues coordinate 2-oxoglutarate: Asn193, Tyr195, and His204. Residues Cys230 and Cys267 are joined by a disulfide bond. Lys235 is subject to N6-acetyllysine. His266 and Arg277 together coordinate 2-oxoglutarate. The segment at 298–394 (SSSVLPPSYA…PARKVKMRRH (97 aa)) is disordered. Lys321 is covalently cross-linked (Glycyl lysine isopeptide (Lys-Gly) (interchain with G-Cter in SUMO1)). The residue at position 325 (Ser325) is a Phosphoserine. Lys328 is covalently cross-linked (Glycyl lysine isopeptide (Lys-Gly) (interchain with G-Cter in SUMO2)). A compositionally biased stretch (basic and acidic residues) spans 328 to 349 (KADPDAAHRPRILEMDKEENRR). Residues Ser371 and Ser384 each carry the phosphoserine modification.

This sequence belongs to the alkB family. Monomer. Interacts with RBM33; promoting desumoylation by SENP1 and recruitment to N(6)-methyladenosine-containing mRNAs. Interacts (when acetylated by KAT8) with PSPC1; interaction facilitates recognition of N(6)-methyladenosine (m6A) mRNA. Fe(2+) serves as cofactor. In terms of processing, phosphorylated at Ser-87 and Ser-325 in response to reactive oxygen species (ROS), promoting sumoylation and inactivation. Post-translationally, acetylated by KAT8 at Lys-235, promoting interaction with PSPC1, thereby facilitating recognition of N(6)-methyladenosine (m6A) mRNA by ALKBH5. Deacetylated at Lys-235 by HDAC7. Sumoylated at Lys-86 and Lys-321 by PIAS4 following phosphorylation at Ser-87 and Ser-325 in response to reactive oxygen species (ROS), inhibiting the RNA demethylase activity. Desumoylated by SENP1; relieving RNA demethylase inhibition, leading to N(6)-methyladenosine-containing mRNAs demethylation. In terms of processing, ubiquitinated at Lys-57 via 'Lys-48'-linked polyubiquitin chain, leading to its degradation by the proteasome. Deubiquitinated at Lys-57 by USP9X, promoting its stabilizazion.

It localises to the nucleus speckle. The catalysed reaction is an N(6)-methyladenosine in mRNA + 2-oxoglutarate + O2 = an adenosine in mRNA + formaldehyde + succinate + CO2. RNA demethylase activity is inhibited following sumoylation. Inhibition is relieved following desumoylation. Functionally, dioxygenase that specifically demethylates N(6)-methyladenosine (m6A) RNA, the most prevalent internal modification of messenger RNA (mRNA) in higher eukaryotes. Demethylates RNA by oxidative demethylation, which requires molecular oxygen, alpha-ketoglutarate and iron. Demethylation of m6A mRNA affects mRNA processing, translation and export. Can also demethylate N(6)-methyladenosine in single-stranded DNA (in vitro). Required for the late meiotic and haploid phases of spermatogenesis by mediating m6A demethylation in spermatocytes and round spermatids: m6A demethylation of target transcripts is required for correct splicing and the production of longer 3'-UTR mRNAs in male germ cells. Involved in paraspeckle assembly, a nuclear membraneless organelle, by undergoing liquid-liquid phase separation. Paraspeckle assembly is coupled with m6A demethylation of RNAs, such as NEAT1 non-coding RNA. Also acts as a negative regulator of T-cell development: inhibits gamma-delta T-cell proliferation via demethylation of JAG1 and NOTCH2 transcripts. Inhibits regulatory T-cell (Treg) recruitment by mediating demethylation and destabilization of CCL28 mRNAs. This chain is RNA demethylase ALKBH5 (ALKBH5), found in Bos taurus (Bovine).